A 360-amino-acid chain; its full sequence is Plastid lipid-associated protein 3, chloroplastic (360 aa).

Polar residues predominate over residues 1–37 (MATLFTVTTTSRPFPANPSKTFSPSISLKPNALSFSL). Residues 1–52 (MATLFTVTTTSRPFPANPSKTFSPSISLKPNALSFSLTHHRPPRPLRFSKIR) constitute a chloroplast transit peptide. Positions 1–130 (MATLFTVTTT…EWEEREADDG (130 aa)) are disordered. The span at 38–50 (THHRPPRPLRFSK) shows a compositional bias: basic residues. A compositionally biased stretch (low complexity) spans 53–68 (SSLPSESDSEPEGGYS). Acidic residues predominate over residues 117–127 (TNEDEWEEREA).

It belongs to the PAP/fibrillin family. As to expression, ubiquitous expression among various organs, but only at a very low level.

It localises to the plastid. It is found in the chloroplast. The sequence is that of Plastid lipid-associated protein 3, chloroplastic (PAP3) from Brassica campestris (Field mustard).